We begin with the raw amino-acid sequence, 182 residues long: Oligoribonuclease (182 aa).

Residues 8 to 171 (LIWIDLEMTG…DDIRESIKEL (164 aa)) enclose the Exonuclease domain. Tyr129 is a catalytic residue.

The protein belongs to the oligoribonuclease family.

The protein localises to the cytoplasm. 3'-to-5' exoribonuclease specific for small oligoribonucleotides. This chain is Oligoribonuclease, found in Actinobacillus succinogenes (strain ATCC 55618 / DSM 22257 / CCUG 43843 / 130Z).